The chain runs to 128 residues: MERLQGLLLWLLLSPSVVWASRGPLRPLCRPVNATLAAENEACPVCITFSTSICAGYCPSMVRVLPAALPPVPQPVCTYHELHFASVRLPGCPPGVDPMVSFPVALSCRCGPCRLSTSDCGGPRTQPM.

A signal peptide spans 1 to 20 (MERLQGLLLWLLLSPSVVWA). 5 disulfides stabilise this stretch: C29-C77, C43-C92, C54-C108, C58-C110, and C113-C120. The N-linked (GlcNAc...) asparagine glycan is linked to N33.

The protein belongs to the glycoprotein hormones subunit beta family. In terms of assembly, heterodimer of a common alpha chain and a unique beta chain which confers biological specificity to thyrotropin, lutropin, follitropin and gonadotropin.

Its subcellular location is the secreted. Functionally, promotes spermatogenesis and ovulation by stimulating the testes and ovaries to synthesize steroids. This is Lutropin subunit beta (LHB) from Phodopus sungorus (Striped hairy-footed hamster).